Consider the following 450-residue polypeptide: Phosphoglucosamine mutase (450 aa).

Catalysis depends on Ser-97, which acts as the Phosphoserine intermediate. Residues Ser-97, Asp-236, Asp-238, and Asp-240 each coordinate Mg(2+). Phosphoserine is present on Ser-97.

It belongs to the phosphohexose mutase family. The cofactor is Mg(2+). Activated by phosphorylation.

It catalyses the reaction alpha-D-glucosamine 1-phosphate = D-glucosamine 6-phosphate. Catalyzes the conversion of glucosamine-6-phosphate to glucosamine-1-phosphate. This is Phosphoglucosamine mutase from Prochlorococcus marinus (strain MIT 9312).